The following is a 310-amino-acid chain: Ninja-family protein 3 (310 aa).

Disordered stretches follow at residues 1–29, 68–140, and 156–215; these read MASRDFLGRFGGEKGASSDKAGGGAGEPD, SLPG…DDAQ, and DQGN…EQPP. Over residues 99-108 the composition is skewed to basic and acidic residues; sequence ERWRRREMQS. 2 stretches are compositionally biased toward polar residues: residues 156-166 and 176-193; these read DQGNASSSMPE and KSTSSMEISSDNNNQNKS.

Belongs to the Ninja family.

Its subcellular location is the nucleus. In Triticum aestivum (Wheat), this protein is Ninja-family protein 3 (AFP-D1).